Reading from the N-terminus, the 136-residue chain is Small ribosomal subunit protein uS8 (136 aa).

It belongs to the universal ribosomal protein uS8 family. Part of the 30S ribosomal subunit. Contacts proteins S5 and S12.

In terms of biological role, one of the primary rRNA binding proteins, it binds directly to 16S rRNA central domain where it helps coordinate assembly of the platform of the 30S subunit. The protein is Small ribosomal subunit protein uS8 of Sulfurihydrogenibium sp. (strain YO3AOP1).